A 48-amino-acid polypeptide reads, in one-letter code: Large ribosomal subunit protein eL40 (48 aa).

It belongs to the eukaryotic ribosomal protein eL40 family.

The protein is Large ribosomal subunit protein eL40 of Methanospirillum hungatei JF-1 (strain ATCC 27890 / DSM 864 / NBRC 100397 / JF-1).